The sequence spans 595 residues: Miltiradiene synthase KSL1, chloroplastic (595 aa).

The N-terminal 47 residues, 1 to 47, are a transit peptide targeting the chloroplast; that stretch reads MSLAFNPAATAFSGNGARSRRENFPVKHVTVRGFPMITNKSSFAVKC. 4 residues coordinate Mg(2+): D334, D338, N478, and E486. The DDXXD motif motif lies at 334 to 338; it reads DDFFD.

Belongs to the terpene synthase family. Mg(2+) serves as cofactor.

Its subcellular location is the plastid. The protein localises to the chloroplast. The catalysed reaction is (+)-copalyl diphosphate = miltiradiene + diphosphate. Its pathway is secondary metabolite biosynthesis; terpenoid biosynthesis. Its function is as follows. Involved in tanshinone biosynthesis in hairy roots. Catalyzes the conversion of copalyl diphosphate (CPP) to miltiradiene. This chain is Miltiradiene synthase KSL1, chloroplastic, found in Salvia miltiorrhiza (Chinese sage).